Reading from the N-terminus, the 176-residue chain is Ribosome rescue factor SmrB (176 aa).

The region spanning 98–173 (LDLHGLNQYQ…NDAAIMVIIE (76 aa)) is the Smr domain.

The protein belongs to the SmrB family. Associates with collided ribosomes, but not with correctly translating polysomes.

Functionally, acts as a ribosome collision sensor. Detects stalled/collided disomes (pairs of ribosomes where the leading ribosome is stalled and a second ribosome has collided with it) and endonucleolytically cleaves mRNA at the 5' boundary of the stalled ribosome. Stalled/collided disomes form a new interface (primarily via the 30S subunits) that binds SmrB. Cleaved mRNA becomes available for tmRNA ligation, leading to ribosomal subunit dissociation and rescue of stalled ribosomes. The sequence is that of Ribosome rescue factor SmrB from Buchnera aphidicola subsp. Schizaphis graminum (strain Sg).